The following is a 765-amino-acid chain: Glucosamine inositolphosphorylceramide transferase 1 (765 aa).

3 helical membrane passes run 43–63 (FFAS…WFVF), 394–414 (VILG…LGFL), and 476–496 (MGKF…CVGV). Substrate-binding positions include Asn-553, 577 to 582 (NSLNNR), 598 to 600 (DDD), Arg-628, and 683 to 687 (FNCED). Mn(2+) is bound at residue Asp-600. Cysteines 685 and 738 form a disulfide. Asp-687 is a catalytic residue.

This sequence belongs to the glycosyltransferase 64 family. Mn(2+) is required as a cofactor. In terms of tissue distribution, specifically and highly expressed in developing embryos and mature seeds. Also detected at low levels in stigma and pollen.

It localises to the membrane. It carries out the reaction an N-(2R-hydroxy-very-long-chain fatty acyl)-(R)-4-hydroxysphingoid base + a 1,2-diacyl-sn-glycero-3-phospho-(1D-myo-inositol) = a 1D-myo-inositol-1-phospho-N-[(R)-2-hydroxy-very-long-chain fatty acyl]-(R)-4-hydroxysphingoid base + a 1,2-diacyl-sn-glycerol. The protein operates within sphingolipid metabolism. Functionally, glycosyltransferase that mediates the glycosylation of glycosylinositol phosphorylceramides (GIPCs), the major sphingolipids in the plasma membrane; acts as a HexN(Ac)-specific GIPC sugar transferase and accepts glucosamine (GlcN) and N-acetylglucosamine (GlcNAc) as the sugar unit. Responsible for the glycosylation of a subgroup of GIPCs found in seeds and pollen that contain GlcNAc and GlcN (GlcN(Ac)). Maybe involved in the maintenance of cell-cell adhesion. The sequence is that of Glucosamine inositolphosphorylceramide transferase 1 from Arabidopsis thaliana (Mouse-ear cress).